Reading from the N-terminus, the 260-residue chain is MGNIKSFALYISILLLIVVVAGCGKSDKTKEDSKEEQIKKSFAKTLDMYPIKNLEDLYDKEGYRDGEFKKGDKGTWTLLTSFSKSNKPDEIDDEGMVLYLNRNTKKATGYYFVNKIYDDISKNQNEKKYRVELKNNKIVLLDNVEDEKLKQKIENFKFFSQYADFKDLKNYQDGSITTNENIPSYEAEYKLNNSDENVKKLRDIYPITTKKAPILKLHIDGDIKGSSVGYKKIEYKFSKVKDQETTLRDYLNFGPSDEDS.

The first 22 residues, 1-22 (MGNIKSFALYISILLLIVVVAG), serve as a signal peptide directing secretion. Residue C23 is the site of N-palmitoyl cysteine attachment. A lipid anchor (S-diacylglycerol cysteine) is attached at C23.

This sequence belongs to the staphylococcal tandem lipoprotein family.

It is found in the cell membrane. This is an uncharacterized protein from Staphylococcus aureus (strain MRSA252).